A 293-amino-acid polypeptide reads, in one-letter code: N-acetylneuraminate lyase (293 aa).

Positions 48 and 49 each coordinate aceneuramate. Tyr-137 (proton donor) is an active-site residue. Lys-165 functions as the Schiff-base intermediate with substrate in the catalytic mechanism. Residues Thr-167, Gly-189, Asp-191, Glu-192, and Ser-208 each coordinate aceneuramate.

It belongs to the DapA family. NanA subfamily. In terms of assembly, homotetramer.

The protein resides in the cytoplasm. The catalysed reaction is aceneuramate = aldehydo-N-acetyl-D-mannosamine + pyruvate. Its pathway is amino-sugar metabolism; N-acetylneuraminate degradation; D-fructose 6-phosphate from N-acetylneuraminate: step 1/5. Functionally, catalyzes the reversible aldol cleavage of N-acetylneuraminic acid (sialic acid; Neu5Ac) to form pyruvate and N-acetylmannosamine (ManNAc) via a Schiff base intermediate. The sequence is that of N-acetylneuraminate lyase from Staphylococcus aureus (strain MRSA252).